The primary structure comprises 549 residues: Glucose-6-phosphate isomerase (549 aa).

The active-site Proton donor is the E355. Residues H386 and K514 contribute to the active site.

This sequence belongs to the GPI family.

It is found in the cytoplasm. The catalysed reaction is alpha-D-glucose 6-phosphate = beta-D-fructose 6-phosphate. Its pathway is carbohydrate biosynthesis; gluconeogenesis. The protein operates within carbohydrate degradation; glycolysis; D-glyceraldehyde 3-phosphate and glycerone phosphate from D-glucose: step 2/4. Catalyzes the reversible isomerization of glucose-6-phosphate to fructose-6-phosphate. The protein is Glucose-6-phosphate isomerase of Salmonella arizonae (strain ATCC BAA-731 / CDC346-86 / RSK2980).